A 101-amino-acid chain; its full sequence is Small ribosomal subunit protein bS6 (101 aa).

It belongs to the bacterial ribosomal protein bS6 family.

Functionally, binds together with bS18 to 16S ribosomal RNA. The polypeptide is Small ribosomal subunit protein bS6 (Paenarthrobacter aurescens (strain TC1)).